Reading from the N-terminus, the 902-residue chain is MLGKIVTKIFGSRNERAIRRMRKVVAQINQLEPEFEKLTDDELKAKTDEFRERLKKGEKEEDILPEAFATVREASKRVFGMRHFDVQLIGGMVLNDRCIAEMRTGEGKTLTATLPAYLNALSGKGVHVVTVNDYLAQRDAENNRPLFEFLGLSVGINLPNMAPPAKREAYNADITYGTNNEFGFDYLRDNMAFSPEERVQRKLHYALVDEVDSILIDEARTPLIISGPAEDSSELYIKMNKVIPHLVPQEKEDSDTFQGEGDYSVDEKTRQVNITERGLVKIEGLLAEAGMMKEGESLYSPANIMLMHHVTAALRAHALFTKDVDYIVKDGEVIIVDEHTGRTMQGRRWSDGLHQAVEAKEGVKIQNENQTLASITFQNYFRLYEKLAGMTGTADTEAFEFNSIYRLETIVIPTNRPMVRKDLPDLVYMNEKGKFAAIIEDIRERTKNGQPVLVGTISIEKSEEISQALTKANIHHNVLNAKFHAMEADIIANAGLPSAVTIATNMAGRGTDIVLGGSWQTEVAKLENPTEEQIEEIKAQWQKRHDAVLASGGLHIIGTERHESRRIDNQLRGRAGRQGDEGSSRFYLSMEDSLMRIFASDKVSGMMRKLGMNETEAIEHPWVTKAIANAQRKVENRNFDIRKQLLEYDDVANDQRRAIYTQRNELLDVADVSETIDSIRQDVFTSMIDNYIPPQSLEEMWDIEGLTACLQNDFDLNLPIKEWLDKEPELHEETLRERILEKSIEVYKAKEEIVSAEMMRNFEKGVMLQTLDSLWKEHLAAMDYLRQGIHLRGYAQKDPKQEYKRESFAMFANMLESLKYEVISTLSKVQVRLPEEVEELERRRREEAERLAKQQQLSHEVTKESQMSAVDGQVASGKKVGRNEPCPCGSGKKYKHCHGKLG.

ATP-binding positions include Gln-87, 105 to 109, and Asp-512; that span reads GEGKT. A disordered region spans residues 850 to 902; the sequence is RLAKQQQLSHEVTKESQMSAVDGQVASGKKVGRNEPCPCGSGKKYKHCHGKLG. The segment covering 853-868 has biased composition (polar residues); that stretch reads KQQQLSHEVTKESQMS. Zn(2+) is bound by residues Cys-886, Cys-888, Cys-897, and His-898. Over residues 892-902 the composition is skewed to basic residues; sequence KKYKHCHGKLG.

Belongs to the SecA family. Monomer and homodimer. Part of the essential Sec protein translocation apparatus which comprises SecA, SecYEG and auxiliary proteins SecDF-YajC and YidC. It depends on Zn(2+) as a cofactor.

It is found in the cell inner membrane. Its subcellular location is the cytoplasm. It catalyses the reaction ATP + H2O + cellular proteinSide 1 = ADP + phosphate + cellular proteinSide 2.. Part of the Sec protein translocase complex. Interacts with the SecYEG preprotein conducting channel. Has a central role in coupling the hydrolysis of ATP to the transfer of proteins into and across the cell membrane, serving both as a receptor for the preprotein-SecB complex and as an ATP-driven molecular motor driving the stepwise translocation of polypeptide chains across the membrane. In Proteus mirabilis (strain HI4320), this protein is Protein translocase subunit SecA.